Here is a 1115-residue protein sequence, read N- to C-terminus: Neural cell adhesion molecule 1 (1115 aa).

The signal sequence occupies residues 1–19 (MLRTKDLIWTLFFLGTAVS). Ig-like C2-type domains follow at residues 20–111 (LQVD…ATVN), 116–205 (QKLM…KDIQ), 212–302 (PTVQ…ASIH), 309–402 (PKIT…MYLE), and 407–492 (PKLQ…ESLE). Topologically, residues 20 to 711 (LQVDIVPSQG…NGSPTAGLST (692 aa)) are extracellular. Disulfide bonds link C41–C96 and C139–C189. Residues 152–156 (KHKGR) and 161–165 (KKDVR) each bind heparin. A glycan (N-linked (GlcNAc...) asparagine; partial) is linked at N222. C235 and C288 are joined by a disulfide. 5 N-linked (GlcNAc...) asparagine glycosylation sites follow: N316, N348, N424, N450, and N479. C330 and C386 are disulfide-bonded. A disulfide bridge links C427 with C480. 2 consecutive Fibronectin type-III domains span residues 500-599 (TPSS…TQPV) and 601-696 (EPSA…SAQP). A lipid anchor (GPI-anchor amidated serine) is attached at T706. A helical membrane pass occupies residues 712-729 (GAIVGILIVIFVLLLVVM). Residues 730–1115 (DITCYFLNKC…TQTKENESKA (386 aa)) lie on the Cytoplasmic side of the membrane. Disordered stretches follow at residues 756 to 809 (GAKG…TEPE), 839 to 912 (FATA…SASN), and 924 to 1115 (VLSP…ESKA). Residues 758–799 (KGKDMEEGKAAFSKDESKEPIVEVRTEEERTPNHDGGKHTEP) show a composition bias toward basic and acidic residues. Phosphoserine is present on residues S770 and S774. Composition is skewed to low complexity over residues 800 to 809 (NETTPLTEPE), 845 to 856 (SPTSETTTLTSS), and 876 to 896 (TPSKGVTASSSSPASAPKVAP). Phosphoserine occurs at positions 887 and 890. Polar residues-rich tracts occupy residues 902-912 (DTPTSAPSASN) and 926-935 (SPSTPASAGE). S926 carries the post-translational modification Phosphoserine. A Phosphothreonine modification is found at T929. Low complexity-rich tracts occupy residues 936-974 (TSKAPPASKASPAPTPTPAGAASPLAAVAAPATDAPQAK) and 999-1012 (AATAPASPKSKAAT). Phosphoserine occurs at positions 946 and 958. A Phosphothreonine modification is found at T1001. S1005 carries the post-translational modification Phosphoserine. Basic and acidic residues-rich tracts occupy residues 1019–1037 (EDLKMDEGNFKTPDIDLAK) and 1074–1091 (KTEKGPVETKSEPPESEA). T1030 is modified (phosphothreonine).

Interacts with MDK. Found in a complex with SLC39A6, SLC39A10 and with NCAM1; this complex controls NCAM1 phosphorylation and integration into focal adhesion complexes during epithelial-tomesenchymal transition. Interacts with synaptic plasticity regulator PANTS. In terms of processing, polysialylated by ST8SIA2 and ST8SIA4. Polysialylation modulates cell interactions by confering both attractive and repulsive properties that are highly regulated by ST8SIA2 and ST8SIA4. Polysialylation is formed on a-2,3-linked sialic acid of core glycans.

The protein localises to the cell membrane. Its function is as follows. This protein is a cell adhesion molecule involved in neuron-neuron adhesion, neurite fasciculation, outgrowth of neurites, etc. The protein is Neural cell adhesion molecule 1 of Mus musculus (Mouse).